A 514-amino-acid polypeptide reads, in one-letter code: Cytochrome P450 monooxygenase MO6277 (514 aa).

Residues 6 to 26 form a helical membrane-spanning segment; that stretch reads LTVLALLGGTLLLYCSGLVIY. Position 457 (cysteine 457) interacts with heme.

It belongs to the cytochrome P450 family. The cofactor is heme.

Its subcellular location is the membrane. The enzyme catalyses polyporic acid + reduced [NADPH--hemoprotein reductase] + O2 = ascocorynin + oxidized [NADPH--hemoprotein reductase] + H2O + H(+). It functions in the pathway secondary metabolite biosynthesis. In terms of biological role, cytochrome P450 monooxygenase that hydroxylates polyporic acid produced by the nonribosomal peptide synthetase acyN to produce the less toxic metabolite ascocorynin. The hydrophobic substrate polyporic acid might approach the active site from the membrane and, after hydroxylation into ascocorynin, leaves into the cytoplasm. MO6277 appears vital to avoid high-level accumulation of polyporic acid in the fungal membrane. This Ascocoryne sarcoides (Purple jellydisc fungus) protein is Cytochrome P450 monooxygenase MO6277.